Reading from the N-terminus, the 291-residue chain is Undecaprenyl-diphosphatase (291 aa).

Helical transmembrane passes span 1-21 (MFII…LTEF), 48-68 (SAFT…AWVF), 102-122 (LHVL…DDFI), 126-146 (LFSV…MIIA), 162-182 (ISYF…WPGF), 203-223 (SDFT…LSLL), 231-251 (IADI…GLIA), and 267-287 (FAIY…GFGI).

Belongs to the UppP family.

It is found in the cell membrane. The enzyme catalyses di-trans,octa-cis-undecaprenyl diphosphate + H2O = di-trans,octa-cis-undecaprenyl phosphate + phosphate + H(+). Functionally, catalyzes the dephosphorylation of undecaprenyl diphosphate (UPP). Confers resistance to bacitracin. This is Undecaprenyl-diphosphatase from Staphylococcus aureus (strain USA300).